Consider the following 192-residue polypeptide: dCTP deaminase, dUMP-forming (192 aa).

Residues 101-106 (KSSLGR), Asp119, 127-129 (TLE), Gln148, Tyr162, and Gln174 each bind dCTP. Glu129 (proton donor/acceptor) is an active-site residue. The tract at residues 169-192 (SRYQGQRGPTPSRSWQSWRTWPTR) is disordered. Over residues 171–192 (YQGQRGPTPSRSWQSWRTWPTR) the composition is skewed to polar residues.

This sequence belongs to the dCTP deaminase family. In terms of assembly, homotrimer.

The catalysed reaction is dCTP + 2 H2O = dUMP + NH4(+) + diphosphate. Its pathway is pyrimidine metabolism; dUMP biosynthesis; dUMP from dCTP: step 1/1. Bifunctional enzyme that catalyzes both the deamination of dCTP to dUTP and the hydrolysis of dUTP to dUMP without releasing the toxic dUTP intermediate. The sequence is that of dCTP deaminase, dUMP-forming from Salinispora tropica (strain ATCC BAA-916 / DSM 44818 / JCM 13857 / NBRC 105044 / CNB-440).